Consider the following 671-residue polypeptide: DNA ligase (671 aa).

Residues 32-36, 81-82, and E113 contribute to the NAD(+) site; these read DAEYD and SL. The active-site N6-AMP-lysine intermediate is K115. R136, E173, K290, and K314 together coordinate NAD(+). Positions 408, 411, 426, and 432 each coordinate Zn(2+). The BRCT domain occupies 593–671; sequence EIDSPFAGKT…EAEMIRLLGA (79 aa).

The protein belongs to the NAD-dependent DNA ligase family. LigA subfamily. The cofactor is Mg(2+). Requires Mn(2+) as cofactor.

The catalysed reaction is NAD(+) + (deoxyribonucleotide)n-3'-hydroxyl + 5'-phospho-(deoxyribonucleotide)m = (deoxyribonucleotide)n+m + AMP + beta-nicotinamide D-nucleotide.. Its function is as follows. DNA ligase that catalyzes the formation of phosphodiester linkages between 5'-phosphoryl and 3'-hydroxyl groups in double-stranded DNA using NAD as a coenzyme and as the energy source for the reaction. It is essential for DNA replication and repair of damaged DNA. The sequence is that of DNA ligase from Salmonella paratyphi B (strain ATCC BAA-1250 / SPB7).